The chain runs to 61 residues: UPF0434 protein Pfl01_4174 (61 aa).

The protein belongs to the UPF0434 family.

The polypeptide is UPF0434 protein Pfl01_4174 (Pseudomonas fluorescens (strain Pf0-1)).